Reading from the N-terminus, the 249-residue chain is 2,3-bisphosphoglycerate-dependent phosphoglycerate mutase (249 aa).

Residues 10–17 (RHGESEWN), 23–24 (TG), Arg-62, 89–92 (ERHY), Lys-100, 116–117 (RR), and 185–186 (GN) contribute to the substrate site. The active-site Tele-phosphohistidine intermediate is His-11. Glu-89 serves as the catalytic Proton donor/acceptor.

The protein belongs to the phosphoglycerate mutase family. BPG-dependent PGAM subfamily. In terms of assembly, homodimer.

The enzyme catalyses (2R)-2-phosphoglycerate = (2R)-3-phosphoglycerate. It functions in the pathway carbohydrate degradation; glycolysis; pyruvate from D-glyceraldehyde 3-phosphate: step 3/5. Catalyzes the interconversion of 2-phosphoglycerate and 3-phosphoglycerate. In Hamiltonella defensa subsp. Acyrthosiphon pisum (strain 5AT), this protein is 2,3-bisphosphoglycerate-dependent phosphoglycerate mutase.